The chain runs to 491 residues: Argininosuccinate lyase (491 aa).

The protein belongs to the lyase 1 family. Argininosuccinate lyase subfamily.

Its subcellular location is the cytoplasm. It carries out the reaction 2-(N(omega)-L-arginino)succinate = fumarate + L-arginine. The protein operates within amino-acid biosynthesis; L-arginine biosynthesis; L-arginine from L-ornithine and carbamoyl phosphate: step 3/3. The protein is Argininosuccinate lyase of Methanosarcina acetivorans (strain ATCC 35395 / DSM 2834 / JCM 12185 / C2A).